Reading from the N-terminus, the 658-residue chain is Glycine--tRNA ligase beta subunit (658 aa).

It belongs to the class-II aminoacyl-tRNA synthetase family. Tetramer of two alpha and two beta subunits.

The protein resides in the cytoplasm. It catalyses the reaction tRNA(Gly) + glycine + ATP = glycyl-tRNA(Gly) + AMP + diphosphate. The polypeptide is Glycine--tRNA ligase beta subunit (Rickettsia bellii (strain OSU 85-389)).